The primary structure comprises 252 residues: TVP38/TMEM64 family membrane protein Mb1528c (252 aa).

The next 6 helical transmembrane spans lie at I32 to P52, L64 to F84, A88 to V108, W149 to A169, I177 to I197, and L209 to I229.

Belongs to the TVP38/TMEM64 family.

Its subcellular location is the cell membrane. This chain is TVP38/TMEM64 family membrane protein Mb1528c, found in Mycobacterium bovis (strain ATCC BAA-935 / AF2122/97).